Reading from the N-terminus, the 111-residue chain is Cornifelin (111 aa).

This sequence belongs to the cornifelin family. As to quaternary structure, directly or indirectly cross-linked to CE proteins loricin and involucrin (IVL).

Its subcellular location is the cytoplasm. Its function is as follows. Part of the insoluble cornified cell envelope (CE) of stratified squamous epithelia. The polypeptide is Cornifelin (CNFN) (Bos taurus (Bovine)).